Here is a 346-residue protein sequence, read N- to C-terminus: Annexin A1 (346 aa).

Ala2 carries the post-translational modification N-acetylalanine. A Phosphoserine; by TRPM7 modification is found at Ser5. Gln19 is covalently cross-linked (Isoglutamyl lysine isopeptide (Gln-Lys) (interchain with K-?)). Tyr21 is modified (phosphotyrosine; by EGFR). Position 27 is a phosphoserine; by PKC (Ser27). Phosphoserine is present on residues Ser34 and Ser37. The residue at position 41 (Thr41) is a Phosphothreonine. Annexin repeat units lie at residues 42–113 (FNPS…ALLK), 114–185 (TPAQ…SLAK), 197–269 (DLAD…AIVK), and 273–344 (SKPA…ALCG). N6-acetyllysine is present on Lys58. Residues Gly59, Val60, Glu62, Lys97, Leu100, Glu105, Met127, Gly129, Gly131, Thr132, and Glu134 each contribute to the Ca(2+) site. Thr136 is subject to Phosphothreonine. Asp171, Gly210, and Arg213 together coordinate Ca(2+). Lys214 is covalently cross-linked (Glycyl lysine isopeptide (Lys-Gly) (interchain with G-Cter in SUMO1); alternate). A Glycyl lysine isopeptide (Lys-Gly) (interchain with G-Cter in SUMO2); alternate cross-link involves residue Lys214. Gly215 contacts Ca(2+). Lys239 carries the N6-acetyllysine modification. Asp253, Glu255, and Leu256 together coordinate Ca(2+). Lys257 participates in a covalent cross-link: Glycyl lysine isopeptide (Lys-Gly) (interchain with G-Cter in SUMO1). Residues Glu261, Met286, Gly288, and Gly290 each contribute to the Ca(2+) site. Lys312 is subject to N6-acetyllysine. A disulfide bridge links Cys324 with Cys343. Residues Leu328, Glu330, and Thr331 each contribute to the Ca(2+) site. A Glycyl lysine isopeptide (Lys-Gly) (interchain with G-Cter in SUMO1) cross-link involves residue Lys332. Glu336 is a binding site for Ca(2+).

It belongs to the annexin family. Homodimer; non-covalently linked. Homodimer; linked by transglutamylation. Homodimers linked by transglutamylation are observed in placenta, but not in other tissues. Interacts with S100A11. Heterotetramer, formed by two molecules each of S100A11 and ANXA1. Interacts with DYSF. Interacts with EGFR. Post-translationally, phosphorylated by protein kinase C, EGFR and TRPM7. Phosphorylated in response to EGF treatment. Sumoylated. In terms of processing, proteolytically cleaved by cathepsin CTSG to release the active N-terminal peptide Ac2-26.

The protein resides in the nucleus. Its subcellular location is the cytoplasm. The protein localises to the cell projection. It localises to the cilium. It is found in the basolateral cell membrane. The protein resides in the lateral cell membrane. Its subcellular location is the cell membrane. The protein localises to the apical cell membrane. It localises to the membrane. It is found in the early endosome. The protein resides in the cytoplasmic vesicle membrane. Its subcellular location is the endosome membrane. The protein localises to the secreted. It localises to the extracellular space. It is found in the extracellular exosome. The protein resides in the cytoplasmic vesicle. Its subcellular location is the secretory vesicle lumen. The protein localises to the phagocytic cup. Plays important roles in the innate immune response as effector of glucocorticoid-mediated responses and regulator of the inflammatory process. Has anti-inflammatory activity. Plays a role in glucocorticoid-mediated down-regulation of the early phase of the inflammatory response. Contributes to the adaptive immune response by enhancing signaling cascades that are triggered by T-cell activation, regulates differentiation and proliferation of activated T-cells. Promotes the differentiation of T-cells into Th1 cells and negatively regulates differentiation into Th2 cells. Has no effect on unstimulated T-cells. Negatively regulates hormone exocytosis via activation of the formyl peptide receptors and reorganization of the actin cytoskeleton. Has high affinity for Ca(2+) and can bind up to eight Ca(2+) ions. Displays Ca(2+)-dependent binding to phospholipid membranes. Plays a role in the formation of phagocytic cups and phagosomes. Plays a role in phagocytosis by mediating the Ca(2+)-dependent interaction between phagosomes and the actin cytoskeleton. Its function is as follows. Functions at least in part by activating the formyl peptide receptors and downstream signaling cascades. Promotes chemotaxis of granulocytes and monocytes via activation of the formyl peptide receptors. Promotes rearrangement of the actin cytoskeleton, cell polarization and cell migration. Promotes resolution of inflammation and wound healing. Acts via neutrophil N-formyl peptide receptors to enhance the release of CXCL2. The polypeptide is Annexin A1 (ANXA1) (Pan troglodytes (Chimpanzee)).